The following is a 379-amino-acid chain: UDP-4-amino-4-deoxy-L-arabinose--oxoglutarate aminotransferase (379 aa).

K182 bears the N6-(pyridoxal phosphate)lysine mark.

This sequence belongs to the DegT/DnrJ/EryC1 family. ArnB subfamily. Homodimer. It depends on pyridoxal 5'-phosphate as a cofactor.

It carries out the reaction UDP-4-amino-4-deoxy-beta-L-arabinose + 2-oxoglutarate = UDP-beta-L-threo-pentopyranos-4-ulose + L-glutamate. The protein operates within nucleotide-sugar biosynthesis; UDP-4-deoxy-4-formamido-beta-L-arabinose biosynthesis; UDP-4-deoxy-4-formamido-beta-L-arabinose from UDP-alpha-D-glucuronate: step 2/3. It functions in the pathway bacterial outer membrane biogenesis; lipopolysaccharide biosynthesis. Its function is as follows. Catalyzes the conversion of UDP-4-keto-arabinose (UDP-Ara4O) to UDP-4-amino-4-deoxy-L-arabinose (UDP-L-Ara4N). The modified arabinose is attached to lipid A and is required for resistance to polymyxin and cationic antimicrobial peptides. In Salmonella schwarzengrund (strain CVM19633), this protein is UDP-4-amino-4-deoxy-L-arabinose--oxoglutarate aminotransferase.